Here is a 235-residue protein sequence, read N- to C-terminus: Aspartate/glutamate leucyltransferase (235 aa).

This sequence belongs to the R-transferase family. Bpt subfamily.

The protein resides in the cytoplasm. It carries out the reaction N-terminal L-glutamyl-[protein] + L-leucyl-tRNA(Leu) = N-terminal L-leucyl-L-glutamyl-[protein] + tRNA(Leu) + H(+). The enzyme catalyses N-terminal L-aspartyl-[protein] + L-leucyl-tRNA(Leu) = N-terminal L-leucyl-L-aspartyl-[protein] + tRNA(Leu) + H(+). In terms of biological role, functions in the N-end rule pathway of protein degradation where it conjugates Leu from its aminoacyl-tRNA to the N-termini of proteins containing an N-terminal aspartate or glutamate. The chain is Aspartate/glutamate leucyltransferase from Pseudomonas savastanoi pv. phaseolicola (strain 1448A / Race 6) (Pseudomonas syringae pv. phaseolicola (strain 1448A / Race 6)).